Here is a 315-residue protein sequence, read N- to C-terminus: DNA-directed RNA polymerase subunit alpha (315 aa).

Residues 1–229 (MLDSKLKAPV…EHLTYFSNPQ (229 aa)) form an alpha N-terminal domain (alpha-NTD) region. Residues 247–315 (EQEEELDLPL…LEKKGFTLKE (69 aa)) are alpha C-terminal domain (alpha-CTD).

It belongs to the RNA polymerase alpha chain family. Homodimer. The RNAP catalytic core consists of 2 alpha, 1 beta, 1 beta' and 1 omega subunit. When a sigma factor is associated with the core the holoenzyme is formed, which can initiate transcription.

It carries out the reaction RNA(n) + a ribonucleoside 5'-triphosphate = RNA(n+1) + diphosphate. Its function is as follows. DNA-dependent RNA polymerase catalyzes the transcription of DNA into RNA using the four ribonucleoside triphosphates as substrates. The polypeptide is DNA-directed RNA polymerase subunit alpha (Thermus thermophilus (strain ATCC BAA-163 / DSM 7039 / HB27)).